A 524-amino-acid chain; its full sequence is 2-isopropylmalate synthase (524 aa).

In terms of domain architecture, Pyruvate carboxyltransferase spans 12 to 274; sequence VIIFDTTLRD…WNNIETTMLT (263 aa). Residues aspartate 21, histidine 209, histidine 211, and asparagine 245 each contribute to the Mn(2+) site. Residues 398–524 are regulatory domain; the sequence is KLNSLTVIAG…EAVPAVAAAG (127 aa).

Belongs to the alpha-IPM synthase/homocitrate synthase family. LeuA type 1 subfamily. Homodimer. The cofactor is Mn(2+).

The protein resides in the cytoplasm. It catalyses the reaction 3-methyl-2-oxobutanoate + acetyl-CoA + H2O = (2S)-2-isopropylmalate + CoA + H(+). The protein operates within amino-acid biosynthesis; L-leucine biosynthesis; L-leucine from 3-methyl-2-oxobutanoate: step 1/4. Functionally, catalyzes the condensation of the acetyl group of acetyl-CoA with 3-methyl-2-oxobutanoate (2-ketoisovalerate) to form 3-carboxy-3-hydroxy-4-methylpentanoate (2-isopropylmalate). The sequence is that of 2-isopropylmalate synthase from Rhodopseudomonas palustris (strain HaA2).